The following is a 423-amino-acid chain: MQYKDENGVNEPSRRRLLKVIGALALAGSCPVAHAQKTQSAPGTLSPDARNEKQPFYGEHQAGILTPQQAAMMLVAFDVLASDKADLERLFRLLTQRFAFLTQGGAAPETPNPRLPPLDSGILGGYIAPDNLTITLSVGHSLFDERFGLAPQMPKKLQKMTRFPNDSLDAALCHGDVLLQICANTQDTVIHALRDIIKHTPDLLSVRWKREGFISDHAARSKGKETPINLLGFKDGTANPDSQNDKLMQKVVWVTADQQEPAWTIGGSYQAVRLIQFRVEFWDRTPLKEQQTIFGRDKQTGAPLGMQHEHDVPDYASDPEGKVIALDSHIRLANPRTAESESSLMLRRGYSYSLGVTNSGQLDMGLLFVCYQHDLEKGFLTVQKRLNGEALEEYVKPIGGGYFFSLPGVKDANDYLGSALLRV.

Residues Met1 to Ala35 constitute a signal peptide (tat-type signal). Heme b is bound by residues Gly236 to Ala238, His329, Asn334 to Arg336, and Arg347.

This sequence belongs to the DyP-type peroxidase family. EfeB subfamily. Homodimer. Part of a ferrous iron transporter composed of EfeU, EfeO and EfeB. Heme b is required as a cofactor. Post-translationally, predicted to be exported by the Tat system. The position of the signal peptide cleavage has not been experimentally proven.

The protein localises to the periplasm. It carries out the reaction heme b + 2 H(+) = protoporphyrin IX + Fe(2+). In terms of biological role, involved in the recovery of exogenous heme iron. Extracts iron from heme while preserving the protoporphyrin ring intact. In Shigella boydii serotype 4 (strain Sb227), this protein is Deferrochelatase (efeB).